The primary structure comprises 156 residues: RNA polymerase sigma factor SigS (156 aa).

A Polymerase core binding motif is present at residues 29–44 (EYYQLLLIKMWQLSQI). Residues 126–145 (QYEIADIMSLSTSTIKLIKA) constitute a DNA-binding region (H-T-H motif).

This sequence belongs to the sigma-70 factor family.

Sigma factors are initiation factors that promote the attachment of RNA polymerase to specific initiation sites and are then released. Sigma-S contributes to the protection against external stress, thus playing a role in cellular fitness and survival. The polypeptide is RNA polymerase sigma factor SigS (sigS) (Staphylococcus aureus (strain MRSA252)).